The sequence spans 173 residues: Lithostathine-2 (173 aa).

The signal sequence occupies residues 1-22 (MAQNNVYLILFLCLMFLSYSQG). The C-type lectin domain maps to 41-171 (INCPEGANAY…EAQYSFVCKF (131 aa)). Disulfide bonds link Cys43/Cys54, Cys71/Cys169, and Cys144/Cys161.

Expressed only in regenerating islets and normal exocrine pancreas, but not in normal pancreatic islets. Expressed strongly in pancreas, weakly in liver, but not at all in gall bladder.

Its subcellular location is the secreted. In terms of biological role, might act as an inhibitor of spontaneous calcium carbonate precipitation. In Mus musculus (Mouse), this protein is Lithostathine-2 (Reg2).